Consider the following 316-residue polypeptide: Tetrahydromethanopterin S-methyltransferase subunit H (316 aa).

The protein belongs to the MtrH family. As to quaternary structure, the complex is composed of 8 subunits; MtrA, MtrB, MtrC, MtrD, MtrE, MtrF, MtrG and MtrH.

The catalysed reaction is 5-methyl-5,6,7,8-tetrahydromethanopterin + coenzyme M + 2 Na(+)(in) = 5,6,7,8-tetrahydromethanopterin + methyl-coenzyme M + 2 Na(+)(out). The protein operates within one-carbon metabolism; methanogenesis from CO(2); methyl-coenzyme M from 5,10-methylene-5,6,7,8-tetrahydromethanopterin: step 2/2. Its function is as follows. Part of a complex that catalyzes the formation of methyl-coenzyme M and tetrahydromethanopterin from coenzyme M and methyl-tetrahydromethanopterin. This is an energy-conserving, sodium-ion translocating step. MtrH catalyzes the transfer of the methyl group from methyl-tetrahydromethanopterin to the corrinoid prosthetic group of MtrA. The polypeptide is Tetrahydromethanopterin S-methyltransferase subunit H (Methanosarcina acetivorans (strain ATCC 35395 / DSM 2834 / JCM 12185 / C2A)).